The sequence spans 273 residues: Rhamnulose-1-phosphate aldolase (273 aa).

Residue Glu-117 is part of the active site. Zn(2+) contacts are provided by His-140, His-142, and His-211.

It belongs to the aldolase class II family. RhaD subfamily. The cofactor is Zn(2+).

The protein localises to the cytoplasm. It catalyses the reaction L-rhamnulose 1-phosphate = (S)-lactaldehyde + dihydroxyacetone phosphate. Its pathway is carbohydrate degradation; L-rhamnose degradation; glycerone phosphate from L-rhamnose: step 3/3. Functionally, catalyzes the reversible cleavage of L-rhamnulose-1-phosphate to dihydroxyacetone phosphate (DHAP) and L-lactaldehyde. This Listeria monocytogenes serotype 4a (strain HCC23) protein is Rhamnulose-1-phosphate aldolase.